The sequence spans 58 residues: Large ribosomal subunit protein bL32 (58 aa).

The protein belongs to the bacterial ribosomal protein bL32 family.

This is Large ribosomal subunit protein bL32 from Thermobifida fusca (strain YX).